The chain runs to 695 residues: UvrABC system protein B (695 aa).

The Helicase ATP-binding domain maps to 25 to 176 (KSILEGHRFQ…NQREVLRDLA (152 aa)). Position 38–45 (38–45 (GATGTGKT)) interacts with ATP. The Beta-hairpin motif lies at 91–114 (YYDYYQPEAYVPSTDTYIAKSSSI). The region spanning 454–617 (LLGEIYLRLE…ITPKPIIKKN (164 aa)) is the Helicase C-terminal domain. Residues 652-687 (PELIGQLELKMKAAAKNLEFEEAAQLRDQIKKLRQR) form the UVR domain.

Belongs to the UvrB family. Forms a heterotetramer with UvrA during the search for lesions. Interacts with UvrC in an incision complex.

It is found in the cytoplasm. In terms of biological role, the UvrABC repair system catalyzes the recognition and processing of DNA lesions. A damage recognition complex composed of 2 UvrA and 2 UvrB subunits scans DNA for abnormalities. Upon binding of the UvrA(2)B(2) complex to a putative damaged site, the DNA wraps around one UvrB monomer. DNA wrap is dependent on ATP binding by UvrB and probably causes local melting of the DNA helix, facilitating insertion of UvrB beta-hairpin between the DNA strands. Then UvrB probes one DNA strand for the presence of a lesion. If a lesion is found the UvrA subunits dissociate and the UvrB-DNA preincision complex is formed. This complex is subsequently bound by UvrC and the second UvrB is released. If no lesion is found, the DNA wraps around the other UvrB subunit that will check the other stand for damage. The chain is UvrABC system protein B from Synechococcus sp. (strain JA-3-3Ab) (Cyanobacteria bacterium Yellowstone A-Prime).